Reading from the N-terminus, the 414-residue chain is NADH-quinone oxidoreductase subunit D (414 aa).

The protein belongs to the complex I 49 kDa subunit family. NDH-1 is composed of 14 different subunits. Subunits NuoB, C, D, E, F, and G constitute the peripheral sector of the complex.

The protein resides in the cell inner membrane. It carries out the reaction a quinone + NADH + 5 H(+)(in) = a quinol + NAD(+) + 4 H(+)(out). Its function is as follows. NDH-1 shuttles electrons from NADH, via FMN and iron-sulfur (Fe-S) centers, to quinones in the respiratory chain. The immediate electron acceptor for the enzyme in this species is believed to be ubiquinone. Couples the redox reaction to proton translocation (for every two electrons transferred, four hydrogen ions are translocated across the cytoplasmic membrane), and thus conserves the redox energy in a proton gradient. This is NADH-quinone oxidoreductase subunit D from Akkermansia muciniphila (strain ATCC BAA-835 / DSM 22959 / JCM 33894 / BCRC 81048 / CCUG 64013 / CIP 107961 / Muc).